A 353-amino-acid chain; its full sequence is Uroporphyrinogen decarboxylase (353 aa).

Substrate-binding positions include 27-31 (RQAGR), Phe-46, Asp-76, Tyr-152, Ser-207, and His-321.

It belongs to the uroporphyrinogen decarboxylase family. Homodimer.

The protein localises to the cytoplasm. It catalyses the reaction uroporphyrinogen III + 4 H(+) = coproporphyrinogen III + 4 CO2. Its pathway is porphyrin-containing compound metabolism; protoporphyrin-IX biosynthesis; coproporphyrinogen-III from 5-aminolevulinate: step 4/4. Its function is as follows. Catalyzes the decarboxylation of four acetate groups of uroporphyrinogen-III to yield coproporphyrinogen-III. This chain is Uroporphyrinogen decarboxylase, found in Listeria monocytogenes serovar 1/2a (strain ATCC BAA-679 / EGD-e).